A 484-amino-acid chain; its full sequence is Zinc metalloproteinase homolog-disintegrin albolatin (484 aa).

The first 20 residues, 1 to 20 (MIQVLLVTICLAVFPYQGSS), serve as a signal peptide directing secretion. Positions 21–191 (IILESGNVND…KTSQLNLPLL (171 aa)) are excised as a propeptide. Asn-80, Asn-251, and Asn-301 each carry an N-linked (GlcNAc...) asparagine glycan. Residues 194–392 (RCIELVMVAD…WTSYCLYNEP (199 aa)) enclose the Peptidase M12B domain. 10 disulfide bridges follow: Cys-305–Cys-387, Cys-345–Cys-369, Cys-347–Cys-352, Cys-403–Cys-422, Cys-414–Cys-432, Cys-416–Cys-427, Cys-426–Cys-449, Cys-440–Cys-446, Cys-445–Cys-470, and Cys-458–Cys-477. The Disintegrin domain maps to 400–484 (PPVCGNYYLE…GDCPWIGYYG (85 aa)). Residues 462 to 464 (KGD) carry the Cell attachment site; atypical (KGD) motif.

It belongs to the venom metalloproteinase (M12B) family. P-II subfamily. P-IIb sub-subfamily. In terms of assembly, homodimer; disulfide-linked (disintegrin). Expressed by the venom gland.

Its subcellular location is the secreted. Its function is as follows. The function of this complete protein has not been studied, but it may be similar to the function of the disintegrin domain. A recombinant protein of this domain (409-484) inhibits collagen-induced human platelet aggregation, without having effect on ADP-induced aggregation. It may act either by blocking the binding of fibrinogen to the platelet receptor GPIIb/GPIIIa (ITGA2B/ITGB3) or by blocking the binding of collagen to the integrin alpha-2/beta-1 complex (ITGA2/ITGB1). The chain is Zinc metalloproteinase homolog-disintegrin albolatin from Trimeresurus albolabris (White-lipped pit viper).